Consider the following 44-residue polypeptide: SPbeta prophage-derived uncharacterized protein YosI (44 aa).

The chain is SPbeta prophage-derived uncharacterized protein YosI (yosI) from Bacillus subtilis (strain 168).